A 568-amino-acid polypeptide reads, in one-letter code: Proline--tRNA ligase (568 aa).

It belongs to the class-II aminoacyl-tRNA synthetase family. ProS type 1 subfamily. As to quaternary structure, homodimer.

The protein localises to the cytoplasm. It catalyses the reaction tRNA(Pro) + L-proline + ATP = L-prolyl-tRNA(Pro) + AMP + diphosphate. Its function is as follows. Catalyzes the attachment of proline to tRNA(Pro) in a two-step reaction: proline is first activated by ATP to form Pro-AMP and then transferred to the acceptor end of tRNA(Pro). As ProRS can inadvertently accommodate and process non-cognate amino acids such as alanine and cysteine, to avoid such errors it has two additional distinct editing activities against alanine. One activity is designated as 'pretransfer' editing and involves the tRNA(Pro)-independent hydrolysis of activated Ala-AMP. The other activity is designated 'posttransfer' editing and involves deacylation of mischarged Ala-tRNA(Pro). The misacylated Cys-tRNA(Pro) is not edited by ProRS. The polypeptide is Proline--tRNA ligase (Alkalilimnicola ehrlichii (strain ATCC BAA-1101 / DSM 17681 / MLHE-1)).